The primary structure comprises 492 residues: GMP reductase (492 aa).

NADP(+) is bound by residues 30–31 and R78; that span reads SR. CBS domains are found at residues 99 to 162 and 164 to 223; these read LIED…LVET and MTPV…LNAT. Residues 260–262 and 313–314 each bind NADP(+); these read DIA and VG. Residues G314, G316, and C319 each coordinate K(+). The active-site Thioimidate intermediate is the C319. Residue T321 is the Proton donor/acceptor of the active site. R322 is a binding site for K(+). GMP-binding positions include 352-354, 375-376, and 401-403; these read DGG, GN, and GMA. Residues M402 and 454 to 457 each bind NADP(+); that span reads SGIS. A Microbody targeting signal motif is present at residues 490-492; sequence SKL.

It belongs to the IMPDH/GMPR family. GuaC type 1 subfamily. In terms of assembly, homotetramer.

Its subcellular location is the glycosome. The enzyme catalyses IMP + NH4(+) + NADP(+) = GMP + NADPH + 2 H(+). Activated by GTP and inhibited by ATP and IMP. Mycophenolic acid (MPA) is a competitive inhibitor of the enzyme with respect to NADPH. Catalyzes the irreversible NADPH-dependent deamination of GMP to IMP. It functions in the conversion of nucleobase, nucleoside and nucleotide derivatives of G to A nucleotides, and in maintaining the intracellular balance of A and G nucleotides. The sequence is that of GMP reductase from Leishmania major.